Consider the following 101-residue polypeptide: Iron-sulfur cluster assembly protein CyaY (101 aa).

It belongs to the frataxin family.

In terms of biological role, involved in iron-sulfur (Fe-S) cluster assembly. May act as a regulator of Fe-S biogenesis. The polypeptide is Iron-sulfur cluster assembly protein CyaY (Haemophilus influenzae (strain 86-028NP)).